Consider the following 432-residue polypeptide: MFRPNSLLIPSNLSTTKSQRNTMLNSSYLSFALIFFCCILFSALASSLPVSDPELVVEEVHRKINESISRRKLGFFSCGSGNPIDDCWRCDKDWEKNRKRLADCGIGFGKNAIGGRDGEIYVVTDPGNDDPVNPRPGTLRYAVIQDEPLWIIFKRDMTIQLKEELIMNSFKTLDGRGASVHISGGPCITIQYVTNIIIHGLHIHDCKQGGNTYVRDSPEHYGYRTVSDGDGVSIFGGSHVWVDHCSLSNCNDGLIDAIRGSTAITISNNYLTHHNKVMLLGHSDTYEQDKNMQVTIAFNHFGEGLVQRMPRCRHGYFHVVNNDYTHWEMYAIGGSANPTINSQGNRFLAPDDSSSKEVTKHEDAPEDEWRNWNWRSEGDLLLNGAFFTYSGAGPAKSSSYSKASSLAARPSSHVGEITIASGALSCKRGSHC.

A signal peptide spans 1–45 (MFRPNSLLIPSNLSTTKSQRNTMLNSSYLSFALIFFCCILFSALA). The N-linked (GlcNAc...) asparagine glycan is linked to Asn-65. The Ca(2+) site is built by Asp-228, Asp-252, and Asp-256. Residue Arg-308 is part of the active site.

It belongs to the polysaccharide lyase 1 family. It depends on Ca(2+) as a cofactor.

It catalyses the reaction Eliminative cleavage of (1-&gt;4)-alpha-D-galacturonan to give oligosaccharides with 4-deoxy-alpha-D-galact-4-enuronosyl groups at their non-reducing ends.. It functions in the pathway glycan metabolism; pectin degradation; 2-dehydro-3-deoxy-D-gluconate from pectin: step 2/5. The chain is Probable pectate lyase 22 from Arabidopsis thaliana (Mouse-ear cress).